Reading from the N-terminus, the 287-residue chain is Nucleotide-binding protein mma_3120 (287 aa).

An ATP-binding site is contributed by 8–15; the sequence is GISGSGKS. Residue 57-60 participates in GTP binding; the sequence is DARS.

Belongs to the RapZ-like family.

Functionally, displays ATPase and GTPase activities. The polypeptide is Nucleotide-binding protein mma_3120 (Janthinobacterium sp. (strain Marseille) (Minibacterium massiliensis)).